The primary structure comprises 966 residues: MSDDKRAKSDKNEKNKYPVNLLDTPFPMRGDLPKREPQWVKQWQDKQLYKKIRAARKGAKKFVLHDGPPYANGDIHIGHAVNKVLKDMIIKARGLTGLDAVYVPGWDCHGMPIEIQIEKKFGKGLPVQEVQAKARAYATEQIKRQMVDFERLGVLGDWDHPYLTMNYRNEADELRALGKIMEKGYVFRGLKPVNWCFDCGSALAEAEVEYKDKVDLSIDVGFPFAEADKLAHAFKVPVEQIDARPGWIVIWTTTPWTIPSNQALNVHPEVEYALVDTPRGHLILATERVEEQLKVYALEGKVIATATGAALSEIRFHHPLAKMDGGYDRLSPIYLGDYVTTDTGSGIVHSAPAYGVEDFQSCKAHGMPDSDIISPVMGNGVYAGTLPLFGGLSIWDANPRIVEALQESGNLFNSHKYTHSYMHCWRHKTPIIYRATSQWFAGMDVDPAEENGKPVPTLRETALAGIDATEFYPAWGKQRLHNMIANRPDWTLSRQRQWGVPMAFFVHKETGALHPRTPELLEAIAKRVEQQGIEAWQTLDPAELLGDEASQYEKNRDTLDVWFDSGTTHWTVIRGSHRDDLYDPSADEADGRLADLYLEGSDQHRGWFHSSLLTASMLYGKPPYKALLTHGFTVDGEGRKMSKSIGNTVSPQDIANKMGAEIIRLWVASTDYSGELSISDEILKRVVESYRRIRNTLRFLLSNLSDYDHGKHALPAAEWLEIDRYAVALTAQLQKEVLSHYEAYEFHPVVAKLQTFCSEDLGGFYLDVLKDRLYTTAPDSKARRAAQNALYHITQAMLHWMAPFLSFTAEEAWQVFAHGTAHTDTIFTSTYYAVPEVDDADDLLQKWHTLREVRAEVTRQLEAVRVEGEIGSSLQAELTIQAGGPVLEALQSLGDDLRFVLLTSAAKVTAAPEAGDLLVTVTPSAHAKCERCWHYRADVGHNPDHPTLCGRCDSNLFGAGEHRSHA.

Basic and acidic residues predominate over residues 1–16; sequence MSDDKRAKSDKNEKNK. The interval 1 to 24 is disordered; it reads MSDDKRAKSDKNEKNKYPVNLLDT. Residues 69-79 carry the 'HIGH' region motif; the sequence is PYANGDIHIGH. E599 contacts L-isoleucyl-5'-AMP. The 'KMSKS' region signature appears at 640–644; it reads KMSKS. K643 serves as a coordination point for ATP. Zn(2+) contacts are provided by C929, C932, C949, and C952.

It belongs to the class-I aminoacyl-tRNA synthetase family. IleS type 1 subfamily. As to quaternary structure, monomer. Requires Zn(2+) as cofactor.

The protein localises to the cytoplasm. It carries out the reaction tRNA(Ile) + L-isoleucine + ATP = L-isoleucyl-tRNA(Ile) + AMP + diphosphate. Functionally, catalyzes the attachment of isoleucine to tRNA(Ile). As IleRS can inadvertently accommodate and process structurally similar amino acids such as valine, to avoid such errors it has two additional distinct tRNA(Ile)-dependent editing activities. One activity is designated as 'pretransfer' editing and involves the hydrolysis of activated Val-AMP. The other activity is designated 'posttransfer' editing and involves deacylation of mischarged Val-tRNA(Ile). The chain is Isoleucine--tRNA ligase from Cupriavidus taiwanensis (strain DSM 17343 / BCRC 17206 / CCUG 44338 / CIP 107171 / LMG 19424 / R1) (Ralstonia taiwanensis (strain LMG 19424)).